Here is a 75-residue protein sequence, read N- to C-terminus: Probable pilin MJ1469 (75 aa).

The propeptide occupies 1–11 (MKPKKIISNKA). The QXSXEXXXL signature appears at 12-20 (QISLELALL).

In terms of processing, the N-terminus is cleaved by the prepilin peptidase EppA, which recognizes the class III signal sequence.

The protein localises to the secreted. Its subcellular location is the cell surface. It localises to the fimbrium. This Methanocaldococcus jannaschii (strain ATCC 43067 / DSM 2661 / JAL-1 / JCM 10045 / NBRC 100440) (Methanococcus jannaschii) protein is Probable pilin MJ1469.